Consider the following 488-residue polypeptide: Glutamyl-tRNA(Gln) amidotransferase subunit A (488 aa).

Residues Lys79 and Ser159 each act as charge relay system in the active site. Ser183 functions as the Acyl-ester intermediate in the catalytic mechanism.

This sequence belongs to the amidase family. GatA subfamily. Heterotrimer of A, B and C subunits.

It catalyses the reaction L-glutamyl-tRNA(Gln) + L-glutamine + ATP + H2O = L-glutaminyl-tRNA(Gln) + L-glutamate + ADP + phosphate + H(+). Its function is as follows. Allows the formation of correctly charged Gln-tRNA(Gln) through the transamidation of misacylated Glu-tRNA(Gln) in organisms which lack glutaminyl-tRNA synthetase. The reaction takes place in the presence of glutamine and ATP through an activated gamma-phospho-Glu-tRNA(Gln). The sequence is that of Glutamyl-tRNA(Gln) amidotransferase subunit A from Wolbachia pipientis subsp. Culex pipiens (strain wPip).